Reading from the N-terminus, the 263-residue chain is Leucyl/phenylalanyl-tRNA--protein transferase (263 aa).

The protein belongs to the L/F-transferase family.

The protein resides in the cytoplasm. The catalysed reaction is N-terminal L-lysyl-[protein] + L-leucyl-tRNA(Leu) = N-terminal L-leucyl-L-lysyl-[protein] + tRNA(Leu) + H(+). It carries out the reaction N-terminal L-arginyl-[protein] + L-leucyl-tRNA(Leu) = N-terminal L-leucyl-L-arginyl-[protein] + tRNA(Leu) + H(+). The enzyme catalyses L-phenylalanyl-tRNA(Phe) + an N-terminal L-alpha-aminoacyl-[protein] = an N-terminal L-phenylalanyl-L-alpha-aminoacyl-[protein] + tRNA(Phe). In terms of biological role, functions in the N-end rule pathway of protein degradation where it conjugates Leu, Phe and, less efficiently, Met from aminoacyl-tRNAs to the N-termini of proteins containing an N-terminal arginine or lysine. The chain is Leucyl/phenylalanyl-tRNA--protein transferase from Novosphingobium aromaticivorans (strain ATCC 700278 / DSM 12444 / CCUG 56034 / CIP 105152 / NBRC 16084 / F199).